The primary structure comprises 373 residues: NADPH-dependent 3-keto-steroid reductase Hsd3b5 (373 aa).

NADP(+) is bound by residues 10-15 (GAGGFL), tyrosine 155, and lysine 159. The Proton donor role is filled by lysine 159. The chain crosses the membrane as a helical span at residues 288–308 (LSLLYWLAFLLETVSFLLRPV). The residue at position 350 (lysine 350) is an N6-acetyllysine.

This sequence belongs to the 3-beta-HSD family. In terms of tissue distribution, expressed in the male liver, starting in late puberty.

Its subcellular location is the endoplasmic reticulum membrane. It localises to the mitochondrion membrane. The catalysed reaction is a 3beta-hydroxysteroid + NADP(+) = a 3-oxosteroid + NADPH + H(+). It carries out the reaction 5alpha-androstane-3beta,17beta-diol + NADP(+) = 17beta-hydroxy-5alpha-androstan-3-one + NADPH + H(+). The protein operates within steroid metabolism. Responsible for the reduction of the oxo group on the C-3 of 5alpha-androstane steroids. Catalyzes the conversion of dihydrotestosterone to its inactive form 5alpha-androstanediol, that does not bind androgen receptor/AR. Does not function as an isomerase. This Mus musculus (Mouse) protein is NADPH-dependent 3-keto-steroid reductase Hsd3b5.